We begin with the raw amino-acid sequence, 1099 residues long: SLIT-ROBO Rho GTPase-activating protein 3 (1099 aa).

One can recognise an F-BAR domain in the interval 19–314 (AQIKEIRTQL…AVDNLDSRSD (296 aa)). Residues 205 to 225 (HEDRPQRRSSVKKIEKMKEKR) form a disordered region. A coiled-coil region spans residues 352-392 (QTELLMRYHQLQSRLATLKIENEEVRKTLDATMQTLQDMLT). Positions 471 to 493 (ERAECGTTRPPCLPPKPQKMRRP) are disordered. The Rho-GAP domain maps to 506-694 (GSMEAFIKDS…TIIIHHEAIF (189 aa)). One can recognise an SH3 domain in the interval 744-803 (VEQIEAIAKFDYMGRSPRELSFKKGASLLLYHRASEDWWEGRHNGVDGLIPHQYIVVQDM). A compositionally biased stretch (polar residues) spans 809–820 (DSLSQKADSEAS). Residues 809 to 847 (DSLSQKADSEASSGPLLDDKASSKNDLQSPTEHISDYGF) are disordered. Phosphoserine occurs at positions 817, 820, 821, 837, and 858. 2 disordered regions span residues 861–911 (AAIP…SPEK) and 926–950 (PDKK…SSLG). The segment covering 926–936 (PDKKALSEGHS) has biased composition (basic and acidic residues). Polar residues predominate over residues 937–947 (MRSTCGSTRHS). A coiled-coil region spans residues 952-987 (HKSLEAEALAEDIEKTMSTALHELRELERQNTVKQA). A Phosphoserine modification is found at Ser954. Residues 995-1099 (LEPLKNPPGP…NSSADKSGTM (105 aa)) are disordered. Composition is skewed to low complexity over residues 1026–1038 (RRSS…MMTT) and 1060–1074 (VRPV…SSSS). Residues 1089–1099 (PNSSADKSGTM) show a composition bias toward polar residues.

As to quaternary structure, homodimer. Forms a heterooligomer with SRGAP1 and SRGAP2 through its F-BAR domain. Interacts with WASF1. Probably interacts with ROBO1. Interacts with FASLG. In terms of tissue distribution, highly expressed in adult and fetal brain. Expressed at low levels in kidney. Isoform 3 is expressed in the kidney but is absent in the brain.

Functionally, GTPase-activating protein for RAC1 and perhaps Cdc42, but not for RhoA small GTPase. May attenuate RAC1 signaling in neurons. The polypeptide is SLIT-ROBO Rho GTPase-activating protein 3 (SRGAP3) (Homo sapiens (Human)).